The chain runs to 509 residues: Src substrate cortactin (509 aa).

Residues methionine 1–phenylalanine 28 are disordered. Positions glycine 17–phenylalanine 28 are enriched in acidic residues. Cortactin repeat units follow at residues alanine 80 to aspartate 116, serine 117 to aspartate 153, tyrosine 154 to aspartate 190, tyrosine 191 to aspartate 227, and tyrosine 228 to aspartate 264. N6-acetyllysine occurs at positions 87 and 107. At serine 113 the chain carries Phosphoserine. The residue at position 119 (arginine 119) is an Omega-N-methylarginine. At lysine 124 the chain carries N6-acetyllysine. Lysine 144 bears the N6-acetyllysine; alternate mark. Residue lysine 144 forms a Glycyl lysine isopeptide (Lys-Gly) (interchain with G-Cter in SUMO1); alternate linkage. Lysine 144 is covalently cross-linked (Glycyl lysine isopeptide (Lys-Gly) (interchain with G-Cter in SUMO2); alternate). Serine 150 is modified (phosphoserine). Residues lysine 152, lysine 161, and lysine 171 each carry the N6-acetyllysine modification. At lysine 181 the chain carries N6-acetyllysine; alternate. Residue lysine 181 forms a Glycyl lysine isopeptide (Lys-Gly) (interchain with G-Cter in SUMO1); alternate linkage. A Glycyl lysine isopeptide (Lys-Gly) (interchain with G-Cter in SUMO2); alternate cross-link involves residue lysine 181. N6-acetyllysine occurs at positions 193 and 198. Lysine 218 is covalently cross-linked (Glycyl lysine isopeptide (Lys-Gly) (interchain with G-Cter in SUMO1)). At lysine 235 the chain carries N6-acetyllysine. Position 261 is a phosphoserine (serine 261). Residues tyrosine 265–phenylalanine 287 form a Cortactin 6; truncated repeat. 4 positions are modified to N6-acetyllysine: lysine 267, lysine 272, lysine 277, and lysine 309. The stretch at serine 311–threonine 364 forms a coiled coil. Residues glutamate 318–alanine 409 form a disordered region. Positions leucine 320–arginine 359 are enriched in basic and acidic residues. Threonine 364 carries the phosphothreonine modification. Residues serine 368, serine 370, serine 380, and serine 381 each carry the phosphoserine modification. Phosphotyrosine; by FAK1 is present on tyrosine 384. Over residues glutamate 393–serine 406 the composition is skewed to low complexity. Tyrosine 405 bears the Phosphotyrosine mark. At serine 406 the chain carries Phosphoserine. 2 positions are modified to phosphotyrosine; by FAK1: tyrosine 429 and tyrosine 445. Residues tyrosine 445 and tyrosine 448 each carry the phosphotyrosine; by SRC modification. The region spanning aspartate 451–glutamine 509 is the SH3 domain.

In terms of assembly, part of a complex composed of NEDD9, AURKA and CTTN; within the complex NEDD9 acts as a scaffold protein and is required for complex formation. Interacts (via N-terminus) with NEDD9. Identified in a complex containing FGFR4, NCAM1, CDH2, PLCG1, FRS2, SRC, SHC1, GAP43 and CTTN. Forms a complex with ABL1 and MYLK. Interacts with SHANK2 and SHANK3 (via its SH3 domain). Interacts with PLXDC2 and SRCIN1. Interacts with SAMSN1 (via SH3 domain). Interacts (via SH3 domain) with ASAP1 (via Pro-rich region). Interacts with FER. Interacts with FGD1. Interacts with ABL2. Interacts with CTTNBP2NL; this interaction may target CTTN to stress fibers. Interacts with CTTNBP2; this interaction may target CTTN at the cell cortex or dendritic spines. Interacts (via SH3 domain) with DNM2. Interacts with ACTN1. Interacts with KCNA2 (via non-phosphorylated C-terminus). Interacts with PTK2/FAK1. Interacts with KCNH1. Interacts (via SH3 domain) with DIP2A (via N-terminus); the interaction enhances CTTN acetylation and is required for proper synaptic transmission. Interacts with XIRP1 (via N-terminus); the interaction promotes CTTN localization to intercalated disks in cardiomyocytes. Post-translationally, acetylated. Phosphorylated by FER. Phosphorylated in response to FGR activation. Phosphorylation by SRC promotes MYLK binding. Tyrosine phosphorylation in transformed cells may contribute to cellular growth regulation and transformation. Phosphorylated by PKN2 at both serine and threonine residues in a GTP-bound Rac1-dependent manner in hyaluronan-induced astrocytes and hence down-regulated CTTN ability to associate with filamentous actin. Phosphorylated on tyrosine residues in response to CHRM1 activation. Phosphorylated by PTK2/FAK1 in response to cell adhesion. Detected in liver (at protein level).

It is found in the cytoplasm. The protein localises to the cytoskeleton. Its subcellular location is the cell projection. It localises to the lamellipodium. The protein resides in the ruffle. It is found in the dendrite. The protein localises to the cell membrane. Its subcellular location is the podosome. It localises to the cell junction. The protein resides in the focal adhesion. It is found in the membrane. The protein localises to the clathrin-coated pit. Its subcellular location is the dendritic spine. It localises to the cell cortex. The protein resides in the endoplasmic reticulum. Contributes to the organization of the actin cytoskeleton and cell shape. Plays a role in the formation of lamellipodia and in cell migration. Plays a role in the regulation of neuron morphology, axon growth and formation of neuronal growth cones. Through its interaction with CTTNBP2, involved in the regulation of neuronal spine density. Plays a role in focal adhesion assembly and turnover. In complex with ABL1 and MYLK regulates cortical actin-based cytoskeletal rearrangement critical to sphingosine 1-phosphate (S1P)-mediated endothelial cell (EC) barrier enhancement. Plays a role in intracellular protein transport and endocytosis, and in modulating the levels of potassium channels present at the cell membrane. Plays a role in receptor-mediated endocytosis via clathrin-coated pits. Required for stabilization of KCNH1 channels at the cell membrane. The protein is Src substrate cortactin of Rattus norvegicus (Rat).